A 155-amino-acid chain; its full sequence is 6,7-dimethyl-8-ribityllumazine synthase (155 aa).

5-amino-6-(D-ribitylamino)uracil contacts are provided by residues Phe23, 57–59, and 81–83; these read AFE and AVI. 86–87 contributes to the (2S)-2-hydroxy-3-oxobutyl phosphate binding site; the sequence is ST. Residue His89 is the Proton donor of the active site. Residue Phe114 participates in 5-amino-6-(D-ribitylamino)uracil binding. Arg128 contacts (2S)-2-hydroxy-3-oxobutyl phosphate.

The protein belongs to the DMRL synthase family.

The catalysed reaction is (2S)-2-hydroxy-3-oxobutyl phosphate + 5-amino-6-(D-ribitylamino)uracil = 6,7-dimethyl-8-(1-D-ribityl)lumazine + phosphate + 2 H2O + H(+). Its pathway is cofactor biosynthesis; riboflavin biosynthesis; riboflavin from 2-hydroxy-3-oxobutyl phosphate and 5-amino-6-(D-ribitylamino)uracil: step 1/2. Its function is as follows. Catalyzes the formation of 6,7-dimethyl-8-ribityllumazine by condensation of 5-amino-6-(D-ribitylamino)uracil with 3,4-dihydroxy-2-butanone 4-phosphate. This is the penultimate step in the biosynthesis of riboflavin. This chain is 6,7-dimethyl-8-ribityllumazine synthase, found in Trichlorobacter lovleyi (strain ATCC BAA-1151 / DSM 17278 / SZ) (Geobacter lovleyi).